Here is a 255-residue protein sequence, read N- to C-terminus: Chlorocatechol 1,2-dioxygenase (255 aa).

Residues Tyr130, Tyr164, His188, and His190 each coordinate Fe cation.

Belongs to the intradiol ring-cleavage dioxygenase family. Fe(3+) is required as a cofactor.

The catalysed reaction is 3,5-dichlorocatechol + O2 = (2E,4E)-2,4-dichloromuconate + 2 H(+). It functions in the pathway aromatic compound metabolism; 3-chlorocatechol degradation. Preferentially converts 3,5-dichlorocatechol as opposed to other chlorinated catechols. Retains diminished activity toward non-chlorinated substrates. This is Chlorocatechol 1,2-dioxygenase (tfdC) from Burkholderia cepacia (Pseudomonas cepacia).